We begin with the raw amino-acid sequence, 209 residues long: MAITKQDIWRAADELDAEGIRPTLAAVRKKLGSGSFTTISDAMAEWKNRKTATLPSSDPLPVAVNEHLAELGNALWAIALAHANARFDEDRKQIEADKAAISQQLAEAIELADTFTRENDQLRERVNQLEPMERERDKLADQLAEVKRRSGEELNRCMEKLTQRDNEAIEARKQAKEAIERAASLQGQVEALKEQVANLTAVLKTGGKQ.

Functionally, may influence the expression of the nuc gene. This is an uncharacterized protein from Shigella flexneri.